We begin with the raw amino-acid sequence, 431 residues long: uncharacterized protein (431 aa).

Disordered regions lie at residues 17 to 66 and 81 to 415; these read VDPE…GQQA and GSVT…ALPR. Residues 91-106 show a composition bias toward basic and acidic residues; sequence DKADREPAARPRDPRS. A compositionally biased stretch (basic residues) spans 173-195; the sequence is TYRRRRPTAATPSRKKKARRGPK. A compositionally biased stretch (low complexity) spans 235–244; the sequence is RTPGPVHSAA. Gly residues predominate over residues 299 to 312; the sequence is RMGGSSGGRGGTPG. The span at 317–342 shows a compositional bias: low complexity; sequence RAAPGARPTAPDGAPGRWDGPADGPA. Positions 343–360 are enriched in gly residues; sequence PGLGRGGWGVGREAGGSG.

This is an uncharacterized protein from Homo sapiens (Human).